The chain runs to 93 residues: U12-lycotoxin-Ls1a (93 aa).

Residues 1–18 form the signal peptide; sequence MKFAVILLFSLVVLTVAS. A propeptide spanning residues 19 to 38 is cleaved from the precursor; that stretch reads ESVEEVRREIDIEDLPEQQR.

Belongs to the neurotoxin 31 family. Post-translationally, contains 5 disulfide bonds. As to expression, expressed by the venom gland.

The protein resides in the secreted. The sequence is that of U12-lycotoxin-Ls1a from Lycosa singoriensis (Wolf spider).